The chain runs to 404 residues: Tryptophan synthase beta chain (404 aa).

N6-(pyridoxal phosphate)lysine is present on K98.

This sequence belongs to the TrpB family. In terms of assembly, tetramer of two alpha and two beta chains. The cofactor is pyridoxal 5'-phosphate.

It catalyses the reaction (1S,2R)-1-C-(indol-3-yl)glycerol 3-phosphate + L-serine = D-glyceraldehyde 3-phosphate + L-tryptophan + H2O. It participates in amino-acid biosynthesis; L-tryptophan biosynthesis; L-tryptophan from chorismate: step 5/5. In terms of biological role, the beta subunit is responsible for the synthesis of L-tryptophan from indole and L-serine. The chain is Tryptophan synthase beta chain from Rhodopseudomonas palustris (strain BisB5).